We begin with the raw amino-acid sequence, 154 residues long: MAIELDLQLAVEDQNGLPSAQDFQTWLDKTIPPFQPQAEVTIRIVDSQESHQLNHDYRGKDKPTNVLSFPFEAPPGMEMDLLGDLVICRQVVEQEAIDQDKPLMAHWAHMVVHGSLHLLGYDHIEDDEAEEMESLETEIMQGMGFTDPYLAEKE.

Zn(2+) contacts are provided by His-113, His-117, and His-123.

Belongs to the endoribonuclease YbeY family. The cofactor is Zn(2+).

The protein resides in the cytoplasm. Functionally, single strand-specific metallo-endoribonuclease involved in late-stage 70S ribosome quality control and in maturation of the 3' terminus of the 16S rRNA. The chain is Endoribonuclease YbeY from Vibrio vulnificus (strain CMCP6).